The sequence spans 283 residues: Large ribosomal subunit protein uL2 (283 aa).

Residues 215-283 (RHKGIRPTVR…IRGRKKRINN (69 aa)) are disordered. Residues 274–283 (IRGRKKRINN) are compositionally biased toward basic residues.

This sequence belongs to the universal ribosomal protein uL2 family. Part of the 50S ribosomal subunit. Forms a bridge to the 30S subunit in the 70S ribosome.

One of the primary rRNA binding proteins. Required for association of the 30S and 50S subunits to form the 70S ribosome, for tRNA binding and peptide bond formation. It has been suggested to have peptidyltransferase activity; this is somewhat controversial. Makes several contacts with the 16S rRNA in the 70S ribosome. The chain is Large ribosomal subunit protein uL2 from Mycoplasma mobile (strain ATCC 43663 / 163K / NCTC 11711) (Mesomycoplasma mobile).